A 147-amino-acid polypeptide reads, in one-letter code: UPF0306 protein YhbP (147 aa).

Belongs to the UPF0306 family.

The protein is UPF0306 protein YhbP of Salmonella agona (strain SL483).